A 113-amino-acid polypeptide reads, in one-letter code: RING-box protein 2 (113 aa).

A disordered region spans residues 1–26; sequence MADVEDGEETCALASHSGSSGSKSGG. Ala-2 is subject to N-acetylalanine. Thr-10 is modified (phosphothreonine; by CK2). 12 residues coordinate Zn(2+): Cys-50, Cys-53, Cys-61, Cys-64, Cys-73, Cys-80, His-82, His-85, Cys-87, Cys-88, Cys-99, and Cys-102. The RING-type zinc-finger motif lies at 61–103; the sequence is CLRCQAENKQEDCVVVWGECNHSFHNCCMSLWVKQNNRCPLCQ.

It belongs to the RING-box family. Catalytic component of multiple cullin-5-RING E3 ubiquitin-protein ligase complexes (ECS complexes, also named CRL5 complexes) composed of CUL5, Elongin BC (ELOB and ELOC), RNF7/RBX2 and a variable SOCS box domain-containing protein as substrate-specific recognition component. Also interacts (with lower preference) with CUL1, CUL2, CUL3, CUL4A and CUL4B; additional evidence is however required to confirm this result in vivo. Interacts with UBE2F. Interacts with CSNK2B, the interaction is not affected by phosphorylation by CK2. May also interact with DCUN1D1, DCUN1D2, DCUN1D3, DCUN1D4 and DCUN1D5. As to quaternary structure, (Microbial infection) Following infection by HIV-1 virus, component of a cullin-5-RING E3 ubiquitin-protein ligase complex (ECS complex) hijacked by the HIV-1 Vif protein. Post-translationally, phosphorylation at Thr-10 by CK2 promotes its degradation by the proteasome. Expressed in heart, liver, skeletal muscle and pancreas. At very low levels expressed in brain, placenta and lung.

It is found in the cytoplasm. It localises to the nucleus. It carries out the reaction S-ubiquitinyl-[E2 ubiquitin-conjugating enzyme]-L-cysteine + [acceptor protein]-L-lysine = [E2 ubiquitin-conjugating enzyme]-L-cysteine + N(6)-ubiquitinyl-[acceptor protein]-L-lysine.. It catalyses the reaction S-[NEDD8-protein]-yl-[E2 NEDD8-conjugating enzyme]-L-cysteine + [cullin]-L-lysine = [E2 NEDD8-conjugating enzyme]-L-cysteine + N(6)-[NEDD8-protein]-yl-[cullin]-L-lysine.. It functions in the pathway protein modification; protein ubiquitination. Its pathway is protein modification; protein neddylation. In terms of biological role, catalytic component of multiple cullin-5-RING E3 ubiquitin-protein ligase complexes (ECS complexes), which mediate the ubiquitination and subsequent proteasomal degradation of target proteins. It is thereby involved in various biological processes, such as cell cycle progression, signal transduction and transcription. The functional specificity of the E3 ubiquitin-protein ligase ECS complexes depend on the variable SOCS box-containing substrate recognition component. Within ECS complexes, RNF7/RBX2 recruits the E2 ubiquitination enzyme to the complex via its RING-type and brings it into close proximity to the substrate. Catalytic subunit of various SOCS-containing ECS complexes, such as the ECS(SOCS7) complex, that regulate reelin signaling by mediating ubiquitination and degradation of DAB1. The ECS(SOCS2) complex mediates the ubiquitination and subsequent proteasomal degradation of phosphorylated EPOR and GHR. Promotes ubiquitination and degradation of NF1, thereby regulating Ras protein signal transduction. As part of the ECS(ASB9) complex, catalyzes ubiquitination and degradation of CKB. The ECS(SPSB3) complex catalyzes ubiquitination of nuclear CGAS. As part of the ECS(RAB40C) complex, mediates ANKRD28 ubiquitination and degradation, thereby inhibiting protein phosphatase 6 (PP6) complex activity and focal adhesion assembly during cell migration. As part of some ECS complex, catalyzes 'Lys-11'-linked ubiquitination and degradation of BTRC. ECS complexes and ARIH2 collaborate in tandem to mediate ubiquitination of target proteins; ARIH2 mediating addition of the first ubiquitin on CRLs targets. Specifically catalyzes the neddylation of CUL5 via its interaction with UBE2F. Does not catalyze neddylation of other cullins (CUL1, CUL2, CUL3, CUL4A or CUL4B). May play a role in protecting cells from apoptosis induced by redox agents. Functionally, inactive. Its function is as follows. (Microbial infection) Following infection by HIV-1 virus, catalytic component of a cullin-5-RING E3 ubiquitin-protein ligase complex (ECS complex) hijacked by the HIV-1 Vif protein, which catalyzes ubiquitination and degradation of APOBEC3F and APOBEC3G. This Homo sapiens (Human) protein is RING-box protein 2.